Here is a 98-residue protein sequence, read N- to C-terminus: Leydig cell tumor 10 kDa protein homolog (98 aa).

Disordered regions lie at residues 1–38 and 73–98; these read MAQGQRKFQAQKPAKSKAAAAAASARNRGPRKGGRVIA and SLPKKLALLKASTKKKEASSSTKMPA. Low complexity predominate over residues 16–25; sequence SKAAAAAASA. The segment covering 28–38 has biased composition (basic residues); it reads RGPRKGGRVIA. Residues 73–83 are compositionally biased toward low complexity; that stretch reads SLPKKLALLKA.

It belongs to the UPF0390 family.

May have a potential role in hypercalcemia of malignancy. The protein is Leydig cell tumor 10 kDa protein homolog of Bos taurus (Bovine).